Consider the following 234-residue polypeptide: Phosphoribosylaminoimidazole-succinocarboxamide synthase (234 aa).

The protein belongs to the SAICAR synthetase family.

It catalyses the reaction 5-amino-1-(5-phospho-D-ribosyl)imidazole-4-carboxylate + L-aspartate + ATP = (2S)-2-[5-amino-1-(5-phospho-beta-D-ribosyl)imidazole-4-carboxamido]succinate + ADP + phosphate + 2 H(+). Its pathway is purine metabolism; IMP biosynthesis via de novo pathway; 5-amino-1-(5-phospho-D-ribosyl)imidazole-4-carboxamide from 5-amino-1-(5-phospho-D-ribosyl)imidazole-4-carboxylate: step 1/2. The sequence is that of Phosphoribosylaminoimidazole-succinocarboxamide synthase from Staphylococcus aureus (strain MRSA252).